Consider the following 673-residue polypeptide: UvrABC system protein B (673 aa).

The Helicase ATP-binding domain maps to 26–414; it reads ANFEAGLAKQ…AGEVTELVVR (389 aa). 39-46 provides a ligand contact to ATP; that stretch reads GVTGSGKT. The Beta-hairpin motif lies at 92 to 115; that stretch reads YYDYYQPEAYVPSSDTFIEKDSSI. Residues 431–597 enclose the Helicase C-terminal domain; it reads QVDDLMSEVH…SVERPIADIM (167 aa). 2 stretches are compositionally biased toward basic and acidic residues: residues 600 to 609 and 618 to 628; these read ARDDAAEKKS and HVAEETPDYRA. The segment at 600–628 is disordered; that stretch reads ARDDAAEKKSGKGRSKSRHVAEETPDYRA. In terms of domain architecture, UVR spans 635–670; that stretch reads AGKLKSLEQKMYQHAKDLEFEAAAQIRDQIQKLKAA.

This sequence belongs to the UvrB family. In terms of assembly, forms a heterotetramer with UvrA during the search for lesions. Interacts with UvrC in an incision complex.

It localises to the cytoplasm. Its function is as follows. The UvrABC repair system catalyzes the recognition and processing of DNA lesions. A damage recognition complex composed of 2 UvrA and 2 UvrB subunits scans DNA for abnormalities. Upon binding of the UvrA(2)B(2) complex to a putative damaged site, the DNA wraps around one UvrB monomer. DNA wrap is dependent on ATP binding by UvrB and probably causes local melting of the DNA helix, facilitating insertion of UvrB beta-hairpin between the DNA strands. Then UvrB probes one DNA strand for the presence of a lesion. If a lesion is found the UvrA subunits dissociate and the UvrB-DNA preincision complex is formed. This complex is subsequently bound by UvrC and the second UvrB is released. If no lesion is found, the DNA wraps around the other UvrB subunit that will check the other stand for damage. The sequence is that of UvrABC system protein B from Xanthomonas axonopodis pv. citri (strain 306).